Reading from the N-terminus, the 491-residue chain is Glutamyl-tRNA(Gln) amidotransferase subunit A (491 aa).

Active-site charge relay system residues include K79 and S154. The active-site Acyl-ester intermediate is the S178.

This sequence belongs to the amidase family. GatA subfamily. As to quaternary structure, heterotrimer of A, B and C subunits.

The catalysed reaction is L-glutamyl-tRNA(Gln) + L-glutamine + ATP + H2O = L-glutaminyl-tRNA(Gln) + L-glutamate + ADP + phosphate + H(+). Its function is as follows. Allows the formation of correctly charged Gln-tRNA(Gln) through the transamidation of misacylated Glu-tRNA(Gln) in organisms which lack glutaminyl-tRNA synthetase. The reaction takes place in the presence of glutamine and ATP through an activated gamma-phospho-Glu-tRNA(Gln). The polypeptide is Glutamyl-tRNA(Gln) amidotransferase subunit A (Alkaliphilus metalliredigens (strain QYMF)).